A 699-amino-acid polypeptide reads, in one-letter code: eEF1A lysine and N-terminal methyltransferase (699 aa).

Residue Met-1 is modified to N-acetylmethionine. Position 267 is a phosphoserine (Ser-267). The interval 433–459 is disordered; it reads VSHKAQKKRKKDRKKQRPADAEDLPAA. A compositionally biased stretch (basic residues) spans 436–448; that stretch reads KAQKKRKKDRKKQ.

The protein belongs to the methyltransferase superfamily. As to quaternary structure, forms a tripartite complex containing GAB1, METTL13 and SPRY2. Within the complex interacts with GAB1 and SPRY2.

It localises to the cytoplasm. The protein localises to the nucleus. It is found in the mitochondrion. It carries out the reaction L-lysyl-[protein] + S-adenosyl-L-methionine = N(6)-methyl-L-lysyl-[protein] + S-adenosyl-L-homocysteine + H(+). It catalyses the reaction N(6)-methyl-L-lysyl-[protein] + S-adenosyl-L-methionine = N(6),N(6)-dimethyl-L-lysyl-[protein] + S-adenosyl-L-homocysteine + H(+). The catalysed reaction is N-terminal glycyl-L-lysyl-L-glutamyl-[protein] + 3 S-adenosyl-L-methionine = N-terminal N,N,N-trimethyl-glycyl-L-lysyl-L-glutamyl-[protein] + 3 S-adenosyl-L-homocysteine + 3 H(+). Protein N-terminal methyltransferase activity is inhibited by GTP and GDP. In terms of biological role, dual methyltransferase that catalyzes methylation of elongation factor 1-alpha (EEF1A1 and EEF1A2) at two different positions, and is therefore involved in the regulation of mRNA translation. Via its C-terminus, methylates EEF1A1 and EEF1A2 at the N-terminal residue 'Gly-2'. Via its N-terminus dimethylates EEF1A1 and EEF1A2 at residue 'Lys-55'. Has no activity towards core histones H2A, H2B, H3 and H4. This Homo sapiens (Human) protein is eEF1A lysine and N-terminal methyltransferase.